The following is a 431-amino-acid chain: Tol-Pal system protein TolB (431 aa).

The signal sequence occupies residues 1-26 (MRLMTKLGFRALVASCLIAAGAAANA). Residues 411–431 (PQILSVQGGSVREPSWGPFMQ) are disordered.

It belongs to the TolB family. In terms of assembly, the Tol-Pal system is composed of five core proteins: the inner membrane proteins TolA, TolQ and TolR, the periplasmic protein TolB and the outer membrane protein Pal. They form a network linking the inner and outer membranes and the peptidoglycan layer.

Its subcellular location is the periplasm. Functionally, part of the Tol-Pal system, which plays a role in outer membrane invagination during cell division and is important for maintaining outer membrane integrity. This chain is Tol-Pal system protein TolB, found in Burkholderia ambifaria (strain ATCC BAA-244 / DSM 16087 / CCUG 44356 / LMG 19182 / AMMD) (Burkholderia cepacia (strain AMMD)).